The primary structure comprises 327 residues: Zinc transport protein ZntB (327 aa).

Over M1–M273 the chain is Cytoplasmic. A helical transmembrane segment spans residues A274–I294. At P295–Q300 the chain is on the periplasmic side. Residues F301–L321 traverse the membrane as a helical segment. At H322–L327 the chain is on the cytoplasmic side.

Belongs to the CorA metal ion transporter (MIT) (TC 1.A.35) family.

The protein localises to the cell inner membrane. It catalyses the reaction Zn(2+)(out) + H(+)(out) = Zn(2+)(in) + H(+)(in). Its function is as follows. Zinc transporter. Acts as a Zn(2+):proton symporter, which likely mediates zinc ion uptake. The chain is Zinc transport protein ZntB from Enterobacter sp. (strain 638).